The chain runs to 175 residues: uncharacterized protein (175 aa).

Disordered regions lie at residues 68–111 (NKSN…DDDQ) and 154–175 (PERA…KLTT). A compositionally biased stretch (low complexity) spans 95 to 106 (EEQPMMPYQQPP).

This sequence belongs to the asfivirus H171R family.

The protein resides in the virion. This is an uncharacterized protein from African swine fever virus (isolate Pig/Kenya/KEN-50/1950) (ASFV).